The following is a 3388-amino-acid chain: Genome polyprotein (3388 aa).

Positions 1–15 are interaction with host EXOC1; sequence MNDQRKKARNTPFNM. At 1 to 101 the chain is on the cytoplasmic side; sequence MNDQRKKARN…LNILNRRRRT (101 aa). The segment at 37 to 72 is hydrophobic; homodimerization of capsid protein C; the sequence is MLQGRGPLKLFMALVAFLRFLTIPPTAGILKRWGTI. A propeptide spans 101 to 114 (ER anchor for the capsid protein C, removed in mature form by serine protease NS3); that stretch reads TAGMIIMLIPTVMA. The helical transmembrane segment at 102-122 threads the bilayer; that stretch reads AGMIIMLIPTVMAFHLTTRNG. Topologically, residues 123-238 are extracellular; sequence EPHMIVSRQE…GAWKHAQRIE (116 aa). The N-linked (GlcNAc...) asparagine; by host glycan is linked to Asn183. Residues 239 to 259 traverse the membrane as a helical segment; sequence TWILRHPGFTIMAAILAYTIG. At 260–265 the chain is on the cytoplasmic side; sequence TTHFQR. Residues 266 to 280 traverse the membrane as a helical segment; it reads VLIFILLTAIAPSMT. The Extracellular segment spans residues 281–725; the sequence is MRCIGISNRD…LHQVFGAIYG (445 aa). Disulfide bonds link Cys283-Cys310, Cys340-Cys401, Cys354-Cys385, and Cys372-Cys396. An N-linked (GlcNAc...) asparagine; by host glycan is attached at Asn347. A fusion peptide region spans residues 378–391; it reads DRGWGNGCGLFGKG. An N-linked (GlcNAc...) asparagine; by host glycan is attached at Asn433. Cystine bridges form between Cys465-Cys565 and Cys582-Cys613. The helical transmembrane segment at 726 to 746 threads the bilayer; that stretch reads AAFSGVSWTMKILIGVIITWI. Residues 747–752 lie on the Cytoplasmic side of the membrane; sequence GMNSRS. Residues 753-773 traverse the membrane as a helical segment; sequence TSLSVSLVLVGIVTLYLGVMV. Topologically, residues 774–1195 are extracellular; the sequence is QADSGCVVSW…MVGATMTDDI (422 aa). Disulfide bonds link Cys779–Cys790, Cys830–Cys918, Cys954–Cys998, Cys1055–Cys1104, Cys1066–Cys1088, and Cys1087–Cys1091. N-linked (GlcNAc...) asparagine; by host glycans are attached at residues Asn905 and Asn982. N-linked (GlcNAc...) asparagine; by host glycosylation is present at Asn1134. Residues 1196–1220 traverse the membrane as a helical segment; the sequence is GMGVTYLALLAAFKVRPTFAAGLLL. The Cytoplasmic segment spans residues 1221 to 1226; the sequence is RKLTSK. Residues 1227–1245 traverse the membrane as a helical segment; the sequence is ELMMTTIGIVLLSQSSIPE. Topologically, residues 1246-1269 are lumenal; it reads TILELTDALALGMMVLKMVRNMEK. A helical transmembrane segment spans residues 1270–1290; sequence YQLAVTIMAILCVPNAVILQN. A topological domain (cytoplasmic) is located at residue Ala1291. A helical transmembrane segment spans residues 1292-1310; it reads WKVSCTILAVVSVSPLFLT. Residues 1311-1317 are Lumenal-facing; it reads SSQQKAD. A helical membrane pass occupies residues 1318-1338; the sequence is WIPLALTIKGLNPTAIFLTTL. The Cytoplasmic portion of the chain corresponds to 1339 to 1346; the sequence is SRTSKKRS. A helical membrane pass occupies residues 1347–1367; sequence WPLNEAIMAVGMVSILASSLL. Topologically, residues 1368–1370 are lumenal; sequence KND. Residues 1371–1391 traverse the membrane as a helical segment; it reads TPMTGPLVAGGLLTVCYVLTG. Topologically, residues 1392 to 1447 are cytoplasmic; that stretch reads RSADLELERATDVKWDDQAEISGSSPILSITISEDGSMSIKNEEEEQTLTILIRTG. Residues 1398-1437 form an interacts with and activates NS3 protease region; it reads LERATDVKWDDQAEISGSSPILSITISEDGSMSIKNEEEE. The helical intramembrane region spans 1448 to 1468; sequence LLVISGLFPVSIPITAAAWYL. The Cytoplasmic segment spans residues 1469 to 2144; it reads WEVKKQRAGV…LSELPETLET (676 aa). Residues 1476-1653 form the Peptidase S7 domain; the sequence is AGVLWDVPSP…EKSIEDNPEI (178 aa). Catalysis depends on charge relay system; for serine protease NS3 activity residues His1526, Asp1550, and Ser1610. The Helicase ATP-binding domain occupies 1655–1811; sequence DDIFRKRRLT…QSNAPIMDEE (157 aa). An important for RNA-binding region spans residues 1659–1662; that stretch reads RKRR. Residue 1668–1675 coordinates ATP; the sequence is LHPGAGKT. The DEAH box motif lies at 1759–1762; it reads DEAH. The Helicase C-terminal domain occupies 1821–1988; it reads SGHEWVTDFK…IIPSMFEPER (168 aa). Lys1863 carries the N6-acetyllysine; by host modification. The helical transmembrane segment at 2145–2165 threads the bilayer; sequence LLLLTLLATVTGGIFLFLMSG. Residues 2166 to 2167 are Lumenal-facing; the sequence is RG. The segment at residues 2168 to 2188 is an intramembrane region (helical); sequence IGKMTLGMCCIITASILLWYA. A topological domain (lumenal) is located at residue Gln2189. A helical membrane pass occupies residues 2190–2210; sequence IQPHWIAASIILEFFLIVLLI. Residues 2211–2225 lie on the Cytoplasmic side of the membrane; that stretch reads PEPEKQRTPQDNQLT. A helical membrane pass occupies residues 2226–2246; the sequence is YVIIAILTVVAATMANEMGFL. Residues 2247–2271 are Lumenal-facing; the sequence is EKTKKDLGLGNIATQQPESNILDID. An intramembrane region (helical) is located at residues 2272-2292; that stretch reads LRPASAWTLYAVATTFITPML. Residues 2293 to 2313 are Lumenal-facing; it reads RHSIENSSVNVSLTAIANQAT. Asn2298 and Asn2302 each carry an N-linked (GlcNAc...) asparagine; by host glycan. Positions 2314 to 2334 form an intramembrane region, helical; that stretch reads VLMGLGKGWPLSKMDIGVPLL. Residues 2335–2344 lie on the Lumenal side of the membrane; the sequence is AIGCYSQVNP. The helical transmembrane segment at 2345–2365 threads the bilayer; sequence ITLTAALLLLVAHYAIIGPGL. The Cytoplasmic portion of the chain corresponds to 2366-2410; the sequence is QAKATREAQKRAAAGIMKNPTVDGITVIDLDPIPYDPKFEKQLGQ. The chain crosses the membrane as a helical span at residues 2411–2431; the sequence is VMLLVLCVTQVLMMRTTWALC. Residues 2432–2456 lie on the Lumenal side of the membrane; sequence EALTLATGPVSTLWEGNPGRFWNTT. Asn2454 carries N-linked (GlcNAc...) asparagine; by host glycosylation. The helical transmembrane segment at 2457–2477 threads the bilayer; that stretch reads IAVSMANIFRGSYLAGAGLLF. At 2478-3388 the chain is on the cytoplasmic side; it reads SIMKNTTSTR…REEEEAGVLW (911 aa). Residues 2490–2752 enclose the mRNA cap 0-1 NS5-type MT domain; that stretch reads TGNIGETLGE…DVDLGSGTRN (263 aa). An S-adenosyl-L-methionine-binding site is contributed by Ser2544. Ser2544 bears the Phosphoserine mark. Lys2549 functions as the For 2'-O-MTase activity in the catalytic mechanism. The SUMO-interacting motif motif lies at 2565–2568; the sequence is VVDL. Gly2574, Trp2575, Thr2592, Lys2593, Asp2619, and Val2620 together coordinate S-adenosyl-L-methionine. Asp2634 acts as the For 2'-O-MTase activity in catalysis. Ile2635 provides a ligand contact to S-adenosyl-L-methionine. Active-site for 2'-O-MTase activity residues include Lys2669 and Glu2705. Residue Tyr2707 coordinates S-adenosyl-L-methionine. Residues Glu2926, His2930, Cys2935, and Cys2938 each coordinate Zn(2+). The 150-residue stretch at 3017–3166 folds into the RdRp catalytic domain; it reads AMYADDTAGW…PLDDRFARAL (150 aa). 3 residues coordinate Zn(2+): His3200, Cys3216, and Cys3335.

It in the N-terminal section; belongs to the class I-like SAM-binding methyltransferase superfamily. mRNA cap 0-1 NS5-type methyltransferase family. In terms of assembly, homodimer. Interacts (via N-terminus) with host EXOC1 (via C-terminus); this interaction results in EXOC1 degradation through the proteasome degradation pathway. As to quaternary structure, forms heterodimers with envelope protein E in the endoplasmic reticulum and Golgi. Homodimer; in the endoplasmic reticulum and Golgi. Interacts with protein prM. Interacts with non-structural protein 1. In terms of assembly, homodimer; Homohexamer when secreted. Interacts with envelope protein E. Interacts with host PRKAA1. As to quaternary structure, interacts (via N-terminus) with serine protease NS3. Forms a heterodimer with serine protease NS3. May form homooligomers. In terms of assembly, forms a heterodimer with NS2B. Interacts with NS4B. Interacts with unphosphorylated RNA-directed RNA polymerase NS5; this interaction stimulates RNA-directed RNA polymerase NS5 guanylyltransferase activity. Interacts with host SHFL. As to quaternary structure, interacts with host MAVS; this interaction inhibits the synthesis of IFN-beta. Interacts with host SHFL. Interacts with host AUP1; the interaction occurs in the presence of Dengue virus NS4B and induces lipophagy which facilitates production of virus progeny particles. May interact with host SRPRA and SEC61G. Interacts with serine protease NS3. In terms of assembly, homodimer. Interacts with host STAT2; this interaction inhibits the phosphorylation of the latter, and, when all viral proteins are present (polyprotein), targets STAT2 for degradation. Interacts with serine protease NS3. Interacts with host PAF1 complex; the interaction may prevent the recruitment of the PAF1 complex to interferon-responsive genes, and thus reduces the immune response. Specific enzymatic cleavages in vivo yield mature proteins. Cleavages in the lumen of endoplasmic reticulum are performed by host signal peptidase, whereas cleavages in the cytoplasmic side are performed by serine protease NS3. Signal cleavage at the 2K-4B site requires a prior NS3 protease-mediated cleavage at the 4A-2K site. Post-translationally, cleaved in post-Golgi vesicles by a host furin, releasing the mature small envelope protein M, and peptide pr. This cleavage is incomplete as up to 30% of viral particles still carry uncleaved prM. In terms of processing, N-glycosylated. N-glycosylated. The excreted form is glycosylated and this is required for efficient secretion of the protein from infected cells. Post-translationally, acetylated by host KAT5. Acetylation modulates NS3 RNA-binding and unwinding activities and plays an important positive role for viral replication. In terms of processing, sumoylation of RNA-directed RNA polymerase NS5 increases NS5 protein stability allowing proper viral RNA replication. Phosphorylated on serines residues. This phosphorylation may trigger NS5 nuclear localization.

It localises to the virion. The protein resides in the host nucleus. Its subcellular location is the host cytoplasm. It is found in the host perinuclear region. The protein localises to the secreted. It localises to the virion membrane. The protein resides in the host endoplasmic reticulum membrane. Its subcellular location is the host mitochondrion. It catalyses the reaction Selective hydrolysis of -Xaa-Xaa-|-Yaa- bonds in which each of the Xaa can be either Arg or Lys and Yaa can be either Ser or Ala.. The catalysed reaction is RNA(n) + a ribonucleoside 5'-triphosphate = RNA(n+1) + diphosphate. The enzyme catalyses a ribonucleoside 5'-triphosphate + H2O = a ribonucleoside 5'-diphosphate + phosphate + H(+). It carries out the reaction ATP + H2O = ADP + phosphate + H(+). It catalyses the reaction a 5'-end (5'-triphosphoguanosine)-ribonucleoside in mRNA + S-adenosyl-L-methionine = a 5'-end (N(7)-methyl 5'-triphosphoguanosine)-ribonucleoside in mRNA + S-adenosyl-L-homocysteine. The catalysed reaction is a 5'-end (N(7)-methyl 5'-triphosphoguanosine)-ribonucleoside in mRNA + S-adenosyl-L-methionine = a 5'-end (N(7)-methyl 5'-triphosphoguanosine)-(2'-O-methyl-ribonucleoside) in mRNA + S-adenosyl-L-homocysteine + H(+). Its function is as follows. Plays a role in virus budding by binding to the cell membrane and gathering the viral RNA into a nucleocapsid that forms the core of a mature virus particle. During virus entry, may induce genome penetration into the host cytoplasm after hemifusion induced by the surface proteins. Can migrate to the cell nucleus where it modulates host functions. Overcomes the anti-viral effects of host EXOC1 by sequestering and degrading the latter through the proteasome degradation pathway. Functionally, inhibits RNA silencing by interfering with host Dicer. In terms of biological role, prevents premature fusion activity of envelope proteins in trans-Golgi by binding to envelope protein E at pH6.0. After virion release in extracellular space, gets dissociated from E dimers. Acts as a chaperone for envelope protein E during intracellular virion assembly by masking and inactivating envelope protein E fusion peptide. prM is the only viral peptide matured by host furin in the trans-Golgi network probably to avoid catastrophic activation of the viral fusion activity in acidic Golgi compartment prior to virion release. prM-E cleavage is inefficient, and many virions are only partially matured. These uncleaved prM would play a role in immune evasion. Its function is as follows. May play a role in virus budding. Exerts cytotoxic effects by activating a mitochondrial apoptotic pathway through M ectodomain. May display a viroporin activity. Functionally, binds to host cell surface receptor and mediates fusion between viral and cellular membranes. Envelope protein is synthesized in the endoplasmic reticulum in the form of heterodimer with protein prM. They play a role in virion budding in the ER, and the newly formed immature particle is covered with 60 spikes composed of heterodimer between precursor prM and envelope protein E. The virion is transported to the Golgi apparatus where the low pH causes dissociation of PrM-E heterodimers and formation of E homodimers. prM-E cleavage is inefficient, and many virions are only partially matured. These uncleaved prM would play a role in immune evasion. In terms of biological role, involved in immune evasion, pathogenesis and viral replication. Once cleaved off the polyprotein, is targeted to three destinations: the viral replication cycle, the plasma membrane and the extracellular compartment. Essential for viral replication. Required for formation of the replication complex and recruitment of other non-structural proteins to the ER-derived membrane structures. Excreted as a hexameric lipoparticle that plays a role against host immune response. Antagonizing the complement function. Binds to the host macrophages and dendritic cells. Inhibits signal transduction originating from Toll-like receptor 3 (TLR3). Mediates complement activation, which may contribute to the pathogenesis of the vascular leakage that occurs in severe dengue disease. Activates autophagy through the AMPK/ERK/mTOR signaling pathway. Mechanistically, acts as the assembly platform for STK11-AMPK interactions and promotes STK11-AMPK interactions. In turn, promotes phosphorylation of the AMPK kinase structural domain and activates AMPK, thereby positively regulating the AMPK/ERK/mTOR signaling pathway and inducing autophagy. Disrupts the host endothelial glycocalyx layer of host pulmonary microvascular endothelial cells, inducing degradation of sialic acid and shedding of heparan sulfate proteoglycans. NS1 induces expression of sialidases, heparanase, and activates cathepsin L, which activates heparanase via enzymatic cleavage. These effects are probably linked to the endothelial hyperpermeability observed in severe dengue disease. Its function is as follows. Component of the viral RNA replication complex that functions in virion assembly and antagonizes the host immune response. Functionally, required cofactor for the serine protease function of NS3. May have membrane-destabilizing activity and form viroporins. In terms of biological role, displays three enzymatic activities: serine protease, NTPase and RNA helicase. NS3 serine protease, in association with NS2B, performs its autocleavage and cleaves the polyprotein at dibasic sites in the cytoplasm: C-prM, NS2A-NS2B, NS2B-NS3, NS3-NS4A, NS4A-2K and NS4B-NS5. NS3 RNA helicase binds RNA and unwinds dsRNA in the 3' to 5' direction. Regulates the ATPase activity of the NS3 helicase activity. NS4A allows NS3 helicase to conserve energy during unwinding. Plays a role in the inhibition of the host innate immune response. Interacts with host MAVS and thereby prevents the interaction between RIGI and MAVS. In turn, IFN-beta production is impaired. Interacts with host AUP1 which mediates induction of lipophagy in host cells and facilitates production of virus progeny particles. Its function is as follows. Functions as a signal peptide for NS4B and is required for the interferon antagonism activity of the latter. Functionally, induces the formation of ER-derived membrane vesicles where the viral replication takes place. Inhibits interferon (IFN)-induced host STAT1 phosphorylation and nuclear translocation, thereby preventing the establishment of cellular antiviral state by blocking the IFN-alpha/beta pathway. In terms of biological role, replicates the viral (+) and (-) RNA genome, and performs the capping of genomes in the cytoplasm. NS5 methylates viral RNA cap at guanine N-7 and ribose 2'-O positions. Besides its role in RNA genome replication, also prevents the establishment of cellular antiviral state by blocking the interferon-alpha/beta (IFN-alpha/beta) signaling pathway. Inhibits host TYK2 and STAT2 phosphorylation, thereby preventing activation of JAK-STAT signaling pathway. May reduce immune responses by preventing the recruitment of the host PAF1 complex to interferon-responsive genes. The chain is Genome polyprotein from Aedimorphus (Red guenon).